Here is a 154-residue protein sequence, read N- to C-terminus: Protein X (154 aa).

The tract at residues 68–117 is mitochondrial targeting sequence; sequence PCALRFTSARRMETTVNAPWNLPTTLHKRTLGLSPRSTTWIEEYIKDCVF.

The protein belongs to the orthohepadnavirus protein X family. In terms of assembly, may form homodimer. May interact with host CEBPA, CFLAR, CREB1, DDB1, E4F1, HBXIP, HSPD1/HSP60, NFKBIA, POLR2E and SMAD4. Interacts with host SMC5-SMC6 complex and induces its degradation. Interacts with host TRPC4AP; leading to prevent ubiquitination of TRPC4AP. Interacts with host PLSCR1; this interaction promotes ubiquitination and degradation of HBx and impairs HBx-mediated cell proliferation. Post-translationally, a fraction may be phosphorylated in insect cells and HepG2 cells, a human hepatoblastoma cell line. Phosphorylated in vitro by host protein kinase C or mitogen-activated protein kinase. N-acetylated in insect cells.

Its subcellular location is the host cytoplasm. The protein resides in the host nucleus. It localises to the host mitochondrion. Multifunctional protein that plays a role in silencing host antiviral defenses and promoting viral transcription. Does not seem to be essential for HBV infection. May be directly involved in development of cirrhosis and liver cancer (hepatocellular carcinoma). Most of cytosolic activities involve modulation of cytosolic calcium. The effect on apoptosis is controversial depending on the cell types in which the studies have been conducted. May induce apoptosis by localizing in mitochondria and causing loss of mitochondrial membrane potential. May also modulate apoptosis by binding host CFLAR, a key regulator of the death-inducing signaling complex (DISC). Promotes viral transcription by using the host E3 ubiquitin ligase DDB1 to target the SMC5-SMC6 complex to proteasomal degradation. This host complex would otherwise bind to viral episomal DNA, and prevents its transcription. Moderately stimulates transcription of many different viral and cellular transcription elements. Promoters and enhancers stimulated by HBx contain DNA binding sites for NF-kappa-B, AP-1, AP-2, c-EBP, ATF/CREB, or the calcium-activated factor NF-AT. The chain is Protein X from Homo sapiens (Human).